A 470-amino-acid polypeptide reads, in one-letter code: MSKVLTSLPAGERVGIAFSGGLDTSVAVAWMREKGAVPCTYTADIGQYDEPDIDSVPGRAGAYGAELARLVDCRAALVEEGLAALTTGAFHIRSAGRSYFNTTPLGRAVTGTLLVRAMLEDDVQIWGDGSTYKGNDIERFYRYGLLANPSLRIYKPWLDAGFVAELGGRKEMSEWLQARDLPYRASTEKAYSTDANIWGATHEAKRLEHLDVGVELVEPIMGVRFWDPEVEIAPEDVSIGFEQGRPVSINGATFESAVDLVLEANAIGGRHGLGMSDQIENRIIEAKSRGIYEAPGMALLHAAYERLVNAIHNEDTVASYHNEGRRLGRLMYEGRWLDPQALMLRESLQRWVGNAVTGTVTLRLRRGEDYSILDTQGPAFSYHPDKLSMERTEDSAFGPVDRIGQLTMRNLDIADSRAKLEQYAGMGMVGSSQVSLIGALESGGAEAIASRGESSGDELLDRAAMESGTD.

Residues 17-25 (AFSGGLDTS) and Ala43 contribute to the ATP site. Tyr99 serves as a coordination point for L-citrulline. Residues Gly129 and Thr131 each contribute to the ATP site. L-aspartate is bound by residues Thr131, Asn135, and Asp136. Asn135 contributes to the L-citrulline binding site. Residue Asp136 coordinates ATP. Residues Arg139 and Ser192 each coordinate L-citrulline. Asp194 is an ATP binding site. Residues Thr201, Glu203, and Glu280 each contribute to the L-citrulline site. Positions 448 to 470 (IASRGESSGDELLDRAAMESGTD) are disordered.

This sequence belongs to the argininosuccinate synthase family. Type 2 subfamily. Homotetramer.

The protein localises to the cytoplasm. The enzyme catalyses L-citrulline + L-aspartate + ATP = 2-(N(omega)-L-arginino)succinate + AMP + diphosphate + H(+). Its pathway is amino-acid biosynthesis; L-arginine biosynthesis; L-arginine from L-ornithine and carbamoyl phosphate: step 2/3. The chain is Argininosuccinate synthase from Kineococcus radiotolerans (strain ATCC BAA-149 / DSM 14245 / SRS30216).